The following is a 687-amino-acid chain: MPKQIIIAEQHQIAAVFSEDQIQELVVATGHHQIGDIYLGVVENVLPGIDAAFVNIGDPERNGFIHVTDLGPLRLKRTAAAITELLAPQQKVLVQVMKEPTGTKGPRLTGNITLPGRYVVLMPYGRGVNLSRRIKSESERNRLRALAILIKPAGMGLLVRTEAEGKPEEAIIEDLEVLQKQWEAIQQEAQSTRAPALLNRDDDFIQRVLRDMYGADVNRIVVDSSTGLKRVKQYLQNWSGGQTPQGLLIDHHRDRSPILEYFRINAAIREALKPRVDLPSGGYIIIEPTEALTVIDVNSGSFTRSATARETVLWTNCEAATEIARQLRLRNIAGVIVVDFIDMESRRDQLQVLEHFNKALRADKARPQIAQLTELGLVELTRKRQGQNIYELFGDTCPACGGLGHTVRLPGETENRLPTPAAEVPERFVSLPTREPRLPTARTTEPRETYDGFGEAFENDSDLGALNLINHPSYQELNDNNKRRARTRRSRIGINGTNGKDEQRITANPLAFISESDLDLDGDVELSAPPELPTPNLGKSGWIERAERTKVIKTEPVKPVVEPPEIRTVEMTPEEQDIFALMGISPLIKLEQEVKNPKSVIINIVQPGQTPTIPTEITPEPVAKVTPSVEVNTPKVKLESKSVSVAATEPIKLTETMEESEVNAASTANRRRRRRSSASDSDTGEDS.

An S1 motif domain is found at Gly-35–Arg-117. Residues Asp-296 and Asp-339 each coordinate Mg(2+). Zn(2+)-binding residues include Cys-397 and Cys-400. The segment at Pro-650–Ser-687 is disordered. The C4 Arg-rich motif, necessary and sufficient to confer PNPase binding on another protein motif lies at Arg-670–Ala-678.

This sequence belongs to the RNase E/G family. May form homodimers or higher order multimers. Interacts with polynucleotide phosphorylase (PNPase, pnp) via the C4 Arg-rich motif (residues 670-678). A homotetramer formed by a dimer of dimers. The cofactor is Mg(2+). Zn(2+) serves as cofactor.

It is found in the cytoplasm. The catalysed reaction is Endonucleolytic cleavage of single-stranded RNA in A- and U-rich regions.. Functionally, endoribonuclease that plays a central role in rRNA and tRNA processing and mRNA decay. Has been shown to act on 9S rRNA (the precursor of 5S rRNA). This Nostoc sp. (strain PCC 7120 / SAG 25.82 / UTEX 2576) protein is Ribonuclease E.